The chain runs to 89 residues: Nitrogen regulatory protein (89 aa).

One can recognise a PTS EIIA type-2 domain in the interval Thr6–Asp89. His68 functions as the Tele-phosphohistidine intermediate in the catalytic mechanism.

The protein localises to the cytoplasm. Functionally, seems to have a role in regulating nitrogen assimilation. The chain is Nitrogen regulatory protein (ptsN) from Pseudomonas putida (Arthrobacter siderocapsulatus).